Consider the following 772-residue polypeptide: MGWLRGIALLSLGVLLAGRVNCQHVKNNVPRLKLSYKEMLESNNIVNFNGLANSSSYHTFLLDEERSRLYVGAKDHIFSFNLVNIKEYQKIVWPVSHSRRDECKWAGKDILRECANFIKVLKTYNQTHLYACGTGAFHPMCTYIEVGSHPEDNIFRMEDSHFENGRGKSPYDPKLLTASLLVDGELYSGTAADFMGRDFAIFRTLGHHHPIRTEQHDSRWLNDPRFISAHLIPESDNPEDDKIYFFFRENAIDGEHTGKATHARIGQICKNDFGGHRSLVNKWTTFLKARLICSVPGPNGIDTHFDELQDVFLMNSKDPKNPIVYGVFTTSSNIFKGSAVCMYSMTDVRRVFLGPYAHRDGPNYQWVPYQGRVPYPRPGTCPSKTFGGFDSTKDLPDEVITFARSHPAMYNPVFPINSRPIMIKTDVDYQFTQIVVDRVDAEDGQYDVMFIGTDIGTVLKVVSIPKETWHELEEVLLEEMTVFREPTVISAMKISTKQQQLYIGSATGVSQLPLHRCDVYGKACAECCLARDPYCAWDGSSCSRYFPTAKRRTRRQDIRNGDPLTHCSDLQHHDNPSGQTLEEKIIYGVENSSTFLECSPKSQRAIVYWQFQKQNDDHKVEIKVDDRMIRTEQGLLLRSLQRRDSGIYFCHAVEHGFIQTLLKVTLEVIDTDHLEELLHKEEDADASKTKDATNSMTPSQKIWYRDFMQLINHPNLNTMDEFCEQVWKRDRKQRRQRPANAQVNTNKWKHLQENKKGRNRRTHEFERAPRSV.

Positions 1-22 (MGWLRGIALLSLGVLLAGRVNC) are cleaved as a signal peptide. A Sema domain is found at 31–514 (RLKLSYKEML…SATGVSQLPL (484 aa)). A glycan (N-linked (GlcNAc...) asparagine) is linked at Asn53. The cysteines at positions 103 and 114 are disulfide-linked. Residue Asn125 is glycosylated (N-linked (GlcNAc...) asparagine). 4 cysteine pairs are disulfide-bonded: Cys132–Cys141, Cys269–Cys381, Cys293–Cys341, and Cys517–Cys535. Residues 576 to 665 (PSGQTLEEKI…GFIQTLLKVT (90 aa)) form the Ig-like C2-type domain. Residue Asn591 is glycosylated (N-linked (GlcNAc...) asparagine). Cysteines 650 and 723 form a disulfide. The segment at 730 to 772 (DRKQRRQRPANAQVNTNKWKHLQENKKGRNRRTHEFERAPRSV) is disordered. Basic and acidic residues predominate over residues 750-772 (HLQENKKGRNRRTHEFERAPRSV).

This sequence belongs to the semaphorin family. In terms of tissue distribution, expressed at relatively high levels in brain and muscle, moderate levels in lung, bursa, and heart and virtually absent in liver. Collapsin-1, -2, -3, and -5 bind to overlapping but distinct axon tracts.

The protein localises to the secreted. Induces the collapse and paralysis of neuronal growth cones. Could serve as a ligand that guides specific growth cones by a motility-inhibiting mechanism. Binds to neuropilin. This is Semaphorin-3A (SEMA3A) from Gallus gallus (Chicken).